We begin with the raw amino-acid sequence, 198 residues long: MTDATTNGAIGAGTLTGESLRKFFERDAITVSRDLLGCHLTVDGVGGRITETEAYFPDDEASHSFRGPTKRNGAMYGKPGNVYIYRIYGVYWCLNFVCHPGSAALIRALEPETGIPRMMERRGTDMLTSLCSGPGKLCQALGIDIAINDRLLDRAPYAIAPSAPVPIVSGKRIGITKNAEAPWRFGIQGSRFLSKPFR.

The protein belongs to the DNA glycosylase MPG family.

The polypeptide is Putative 3-methyladenine DNA glycosylase (Rhizobium johnstonii (strain DSM 114642 / LMG 32736 / 3841) (Rhizobium leguminosarum bv. viciae)).